The sequence spans 523 residues: Flavin-dependent halogenase armH5 (523 aa).

Residues G17, A20, and E50 each contribute to the FAD site. The chloride site is built by S328 and G329. V330 serves as a coordination point for FAD.

It belongs to the flavin-dependent halogenase family.

The enzyme catalyses melleolide F + FADH2 + chloride + O2 = 6'-chloromelleolide F + FAD + 2 H2O + H(+). Its function is as follows. Flavin-dependent halogenase involved in the biosynthesis of melleolides, a range of antifungal and phytotoxic polyketide derivatives composed of an orsellinic acid (OA) moiety esterified to various sesquiterpene alcohols. The halogenase catalyzes the transfer of a single chlorine atom to the melleolide backbone, resulting in a 6'-chloromelleolide product. The enzyme acts on free substrate and does not depend on carrier-protein-dependent acceptor molecules. The chain is Flavin-dependent halogenase armH5 from Armillaria mellea (Honey mushroom).